The sequence spans 685 residues: N(6)-adenosine-methyltransferase MT-A70-like (685 aa).

Residues 464-465 (DI) and Asp482 each bind S-adenosyl-L-methionine. Residues 552–565 (RIIRTGRTGHWLNH) form a positively charged region required for RNA-binding region. Residues Lys599, 622–625 (RMHN), and 635–636 (NQ) contribute to the S-adenosyl-L-methionine site. Residues 657-685 (EIDVQPPSPPRASAMETDNEPMAIDSITA) are disordered. A Phosphoserine modification is found at Ser664.

This sequence belongs to the MT-A70-like family. Interacts with FIP37. Interacts with MTB. Associates with MTB, FIP37, VIR and HAKAI to form the m6A writer complex which is essential for adenosine methylation at specific mRNA sequences.

It is found in the nucleus. It carries out the reaction an adenosine in mRNA + S-adenosyl-L-methionine = an N(6)-methyladenosine in mRNA + S-adenosyl-L-homocysteine + H(+). In terms of biological role, catalytic subunit of the N6-methyltransferase complex, a multiprotein complex that mediates N6-methyladenosine (m6A) methylation at the 5'-[AG]GAC-3' consensus sites of some mRNAs. Associates with MTB, FIP37, VIR and HAKAI to form the m6A writer complex which is essential for adenosine methylation at specific mRNA sequences. N6-methyladenosine (m6A) plays a role in mRNA stability, processing, translation efficiency and editing. The protein is N(6)-adenosine-methyltransferase MT-A70-like of Arabidopsis thaliana (Mouse-ear cress).